A 695-amino-acid chain; its full sequence is RING finger protein 145 (695 aa).

13 consecutive transmembrane segments (helical) span residues 53-73 (YLALNMHYVGYILSVVLLTLP), 77-97 (LAKLYLYFVAALLLFAGHQIS), 123-143 (FITALVGQLVVCTLCSCVMKT), 146-166 (IWLFSAHMLPLLARLCLIPIE), 168-188 (IVVINKFAMIFTGLEVLYFLA), 225-245 (LVVPVLFMVFWLVLFALQIYT), 275-295 (YSLLGLVFTVSFVALGVLTLC), 316-336 (TEGVTLLILAVQTGLIELQVV), 340-360 (FLLSIILFIVVASILQSMLEI), 384-404 (SLCLFLLVFPSYMAYMICQFF), 410-430 (LLIIISSSILTSLQVLGTLFV), 460-480 (LLEFLVALCVVAYGVSETVFG), and 482-502 (WTVMGSMIIFIHSYYNVWLRA). An RING-type; atypical zinc finger spans residues 537–575 (CSICYQDMNSAVITPCSHFFHPGCLKKWLYVQETCPLCH). Residues 589–604 (SGSSTNPVVEQSANNP) are compositionally biased toward polar residues. The interval 589 to 608 (SGSSTNPVVEQSANNPPQEP) is disordered.

It localises to the membrane. This is RING finger protein 145 (rnf145) from Xenopus laevis (African clawed frog).